The primary structure comprises 347 residues: UDP-3-O-acylglucosamine N-acyltransferase (347 aa).

H241 functions as the Proton acceptor in the catalytic mechanism.

Belongs to the transferase hexapeptide repeat family. LpxD subfamily. As to quaternary structure, homotrimer.

It carries out the reaction a UDP-3-O-[(3R)-3-hydroxyacyl]-alpha-D-glucosamine + a (3R)-hydroxyacyl-[ACP] = a UDP-2-N,3-O-bis[(3R)-3-hydroxyacyl]-alpha-D-glucosamine + holo-[ACP] + H(+). The protein operates within bacterial outer membrane biogenesis; LPS lipid A biosynthesis. In terms of biological role, catalyzes the N-acylation of UDP-3-O-acylglucosamine using 3-hydroxyacyl-ACP as the acyl donor. Is involved in the biosynthesis of lipid A, a phosphorylated glycolipid that anchors the lipopolysaccharide to the outer membrane of the cell. The sequence is that of UDP-3-O-acylglucosamine N-acyltransferase from Neisseria meningitidis serogroup A / serotype 4A (strain DSM 15465 / Z2491).